The following is a 961-amino-acid chain: ATPase 7, plasma membrane-type (961 aa).

Residues 1–64 (MTDIEALKAI…EKKESKILKF (64 aa)) lie on the Cytoplasmic side of the membrane. A helical membrane pass occupies residues 65-84 (LGFMWNPLSWVMEAAALMAI). Over 85–96 (GLAHGGGKPADY) the chain is Extracellular. The chain crosses the membrane as a helical span at residues 97–117 (HDFVGIVVLLLINSTISFVEE). At 118 to 246 (NNAGNAAAAL…GHFQKVLTAI (129 aa)) the chain is on the cytoplasmic side. Residues 247-267 (GNFCICSIAVGMAIEIVVIYG) form a helical membrane-spanning segment. Topologically, residues 268–276 (LQKRGYRVG) are extracellular. A helical membrane pass occupies residues 277–294 (IDNLLVLLIGGIPIAMPT). Topologically, residues 295 to 643 (VLSVTMAIGA…TSRAIFQRMK (349 aa)) are cytoplasmic. Asp-332 acts as the 4-aspartylphosphate intermediate in catalysis. Mg(2+) contacts are provided by Asp-588 and Asp-592. Residues 644-665 (NYTIYAVSITIRIVMGFMLLCV) form a helical membrane-spanning segment. At 666–670 (FWEFD) the chain is on the extracellular side. Residues 671-693 (FPPFMVLVIAILNDGTIMTISKD) form a helical membrane-spanning segment. Topologically, residues 694–709 (RVKPSPTPDCWKLKEI) are cytoplasmic. The helical transmembrane segment at 710 to 730 (FATGVVLGAYLAIMTVVFFWA) threads the bilayer. Residues 731-764 (AYETNFFHNIFHVRNFNQHHFKMKDKKVAAHLNE) lie on the Extracellular side of the membrane. The helical transmembrane segment at 765-785 (QMASAVYLQVSTISQALIFVT) threads the bilayer. The Cytoplasmic segment spans residues 786–797 (RSRSWSFVERPG). The chain crosses the membrane as a helical span at residues 798–818 (FLLVIAFLIAQLVASVISAMA). The Extracellular portion of the chain corresponds to 819-826 (NWPFAGIR). A helical membrane pass occupies residues 827-847 (SIGWGWTGVIWIFNIVTYMLL). Over 848-961 (DPIKFLVRYA…EDPNSNNYTI (114 aa)) the chain is Cytoplasmic. Residue Thr-894 is modified to Phosphothreonine. Phosphoserine occurs at positions 910 and 942. The segment at 959-961 (YTI) is interaction with 14-3-3 proteins. The residue at position 960 (Thr-960) is a Phosphothreonine.

This sequence belongs to the cation transport ATPase (P-type) (TC 3.A.3) family. Type IIIA subfamily. Binds to 14-3-3 proteins. The binding is induced by phosphorylation of Thr-960. Binding to 14-3-3 proteins activates the H(+)-ATPase. As to expression, expressed in guard cells, roots and leaves, and barely in mesophyll cells.

The protein resides in the membrane. It catalyses the reaction ATP + H2O + H(+)(in) = ADP + phosphate + 2 H(+)(out). Its function is as follows. The plasma membrane H(+) ATPase of plants and fungi generates a proton gradient that drives the active transport of nutrients by H(+)-symport. The resulting external acidification and/or internal alkinization may mediate growth responses. In Arabidopsis thaliana (Mouse-ear cress), this protein is ATPase 7, plasma membrane-type (AHA7).